A 227-amino-acid chain; its full sequence is Putative N-acetylmannosamine-6-phosphate 2-epimerase (227 aa).

Belongs to the NanE family.

It catalyses the reaction an N-acyl-D-glucosamine 6-phosphate = an N-acyl-D-mannosamine 6-phosphate. It participates in amino-sugar metabolism; N-acetylneuraminate degradation; D-fructose 6-phosphate from N-acetylneuraminate: step 3/5. Its function is as follows. Converts N-acetylmannosamine-6-phosphate (ManNAc-6-P) to N-acetylglucosamine-6-phosphate (GlcNAc-6-P). This Shouchella clausii (strain KSM-K16) (Alkalihalobacillus clausii) protein is Putative N-acetylmannosamine-6-phosphate 2-epimerase.